The following is a 356-amino-acid chain: Carbohydrate sulfotransferase 10 (356 aa).

At 1–6 (MHHQWL) the chain is on the cytoplasmic side. The chain crosses the membrane as a helical; Signal-anchor for type II membrane protein span at residues 7–27 (LLAACFWVIFMFMVASKFITL). Topologically, residues 28 to 356 (TFKDPDVYSA…GYQKPDFLLN (329 aa)) are lumenal. Residue asparagine 99 is glycosylated (N-linked (GlcNAc...) asparagine). Residues 127 to 133 (PKVGNTQ) and 189 to 197 (RDPFERLIS) each bind 3'-phosphoadenylyl sulfate. Residues asparagine 228 and asparagine 316 are each glycosylated (N-linked (GlcNAc...) asparagine).

Belongs to the sulfotransferase 2 family. As to expression, in fetal tissues, it is predominantly expressed in brain, and weakly expressed in lung, kidney and liver. In adult, it is highly expressed in brain, testis, ovary, expressed at intermediate level in heart, pancreas, skeletal muscle, spleen and thymus, and weakly expressed in other tissues. In brain, it is expressed at higher level in the frontal lobe.

The protein localises to the golgi apparatus membrane. It carries out the reaction 3-O-{beta-D-GlcA-(1-&gt;[3)-alpha-D-Xyl-(1-&gt;3)-beta-D-GlcA-(1-&gt;](n)-4)-beta-D-Xyl-(1-&gt;4)-Rib-ol-P-Rib-ol-P-3-beta-D-GalNAc-(1-&gt;3)-beta-D-GlcNAc-(1-&gt;4)-O-6-P-alpha-D-Man}-L-Thr-[protein] + 3'-phosphoadenylyl sulfate = 3-O-{O-3-S-beta-D-GlcA-(1-&gt;[3)-alpha-D-Xyl-(1-&gt;3)-beta-D-GlcA-(1-&gt;](n)-4)-beta-D-Xyl-(1-&gt;4)-Rib-ol-P-Rib-ol-P-3-beta-D-GalNAc-(1-&gt;3)-beta-D-GlcNAc-(1-&gt;4)-O-6-P-alpha-D-Man}-L-Thr-[protein] + adenosine 3',5'-bisphosphate + H(+). The catalysed reaction is 17beta-estradiol 3-O-(beta-D-glucuronate) + 3'-phosphoadenylyl sulfate = 17beta-estradiol 3-O-(3-sulfo-beta-D-glucuronate) + adenosine 3',5'-bisphosphate + H(+). It catalyses the reaction 17beta-estradiol 3-O-(beta-D-glucuronate) 17-sulfate + 3'-phosphoadenylyl sulfate = 17beta-estradiol 3-O-(3-sulfo-beta-D-glucuronate) 17-sulfate + adenosine 3',5'-bisphosphate + H(+). The enzyme catalyses 17beta-estradiol 17-O-(beta-D-glucuronate) + 3'-phosphoadenylyl sulfate = 17beta-estradiol 17-O-(3-sulfo-beta-D-glucuronate) + adenosine 3',5'-bisphosphate + H(+). It carries out the reaction 16alpha,17beta-estriol 3-O-(beta-D-glucuronate) + 3'-phosphoadenylyl sulfate = 16alpha,17beta-estriol 3-O-(3-sulfo-beta-D-glucuronate) + adenosine 3',5'-bisphosphate + H(+). The catalysed reaction is 16alpha,17beta-estriol 16-O-(beta-D-glucuronate) + 3'-phosphoadenylyl sulfate = 16alpha,17beta-estriol 16-O-(3-sulfo-beta-D-glucuronate) + adenosine 3',5'-bisphosphate + H(+). It catalyses the reaction 16alpha,17beta-estriol 17-O-(beta-D-glucuronate) + 3'-phosphoadenylyl sulfate = 16alpha,17beta-estriol 17-O-(3-sulfo-beta-D-glucuronate) + adenosine 3',5'-bisphosphate + H(+). The enzyme catalyses estrone 3-O-(beta-D-glucuronate) + 3'-phosphoadenylyl sulfate = estrone 3-O-(3-sulfo-beta-D-glucuronate) + adenosine 3',5'-bisphosphate + H(+). It carries out the reaction 3alpha,20alpha-dihydroxy-5beta-pregnane 3-O-(beta-D-glucuronate) + 3'-phosphoadenylyl sulfate = 3alpha,20alpha-dihydroxy-5beta-pregnane 3-O-(3-sulfo-beta-D-glucuronate) + adenosine 3',5'-bisphosphate + H(+). The catalysed reaction is testosterone 17-O-(beta-D-glucuronate) + 3'-phosphoadenylyl sulfate = testosterone 17-O-(3-sulfo-beta-D-glucuronate) + adenosine 3',5'-bisphosphate + H(+). It catalyses the reaction 3beta-androst-5-en-17-one 3-O-(beta-D-glucuronate) + 3'-phosphoadenylyl sulfate = 3beta-androst-5-en-17-one 3-O-(3-sulfo-beta-D-glucuronate) + adenosine 3',5'-bisphosphate + H(+). The enzyme catalyses 3alpha,17alpha-dihydroxy-5beta-androstane-11-one-17beta-carboxylate 3-O-(beta-D-glucuronate) + 3'-phosphoadenylyl sulfate = 3alpha,17alpha-dihydroxy-5beta-androstane-11-one-17beta-carboxylate 3-O-(3-sulfo-beta-D-glucuronate) + adenosine 3',5'-bisphosphate + H(+). It carries out the reaction 3alpha-hydroxyetiocholan-17-one 3-O-(beta-D-glucuronate) + 3'-phosphoadenylyl sulfate = 3alpha-hydroxyetiocholan-17-one 3-O-(3-sulfo-beta-D-glucuronate) + adenosine 3',5'-bisphosphate + H(+). The protein operates within steroid metabolism. It participates in protein modification; carbohydrate sulfation. Catalyzes the transfer of sulfate from 3'-phosphoadenylyl sulfate (PAPS) to position 3 of terminal glucuronic acid of both protein- and lipid-linked oligosaccharides. Participates in biosynthesis of HNK-1 carbohydrate structure 3-O-sulfo-beta-D-GlcA-(1-&gt;3)-beta-D-Gal-(1-&gt;4)-D-GlcNAc-R, a sulfated glucuronyl-lactosaminyl residue carried by many neural recognition molecules, which is involved in cell interactions during ontogenetic development and in synaptic plasticity in the adult. May be indirectly involved in synapse plasticity of the hippocampus, via its role in HNK-1 biosynthesis. Sulfates terminal glucuronyl residue of the laminin globular (LG)-domain binding epitope on DAG1/alpha-dystroglycan and prevents further polymerization by LARGE1 glycosyltransferase. Likely defines the chain length of LG epitope, conferring binding specificity to extracellular matrix components. Plays a role in down-regulating the steroid hormones. Sulfates glucuronidated estrogens and androgens with an impact in hormone cycle and fertility. Has a preference for glucuronyl moiety at the 3-hydroxyl group of a sterol ring rather than the 17-hydroxyl group, showing high catalytic efficiency for 17beta-estradiol 3-O-(beta-D-glucuronate) and dehydroepiandrosterone 3-O-(beta-D-glucuronate) hormones. This is Carbohydrate sulfotransferase 10 from Homo sapiens (Human).